Here is a 192-residue protein sequence, read N- to C-terminus: E3 ubiquitin-protein ligase RNF183 (192 aa).

Over 1-161 (MAEQQGRELE…RECFRNPQFR (161 aa)) the chain is Cytoplasmic. The segment at 13–60 (CPVCWNPFNNTFHTPKMLDCCHSFCVECLAHLSLVTPARRRLLCPLCR) adopts an RING-type zinc-finger fold. A helical; Anchor for type IV membrane protein transmembrane segment spans residues 162-182 (IFAYLMAVILSVTLLLIFSIF). The Lumenal portion of the chain corresponds to 183-192 (WTKQFLWGVG).

As to quaternary structure, interacts with FATE1. Interacts with SEC16A. Interacts with BCL2L1. In terms of processing, autoubiquitinated (in vitro). As to expression, kidney and testis.

It localises to the endoplasmic reticulum membrane. The protein localises to the endoplasmic reticulum. The protein resides in the golgi apparatus. It is found in the cis-Golgi network membrane. Its subcellular location is the lysosome membrane. It catalyses the reaction S-ubiquitinyl-[E2 ubiquitin-conjugating enzyme]-L-cysteine + [acceptor protein]-L-lysine = [E2 ubiquitin-conjugating enzyme]-L-cysteine + N(6)-ubiquitinyl-[acceptor protein]-L-lysine.. It participates in protein modification; protein ubiquitination. Its function is as follows. Acts as an E3 ubiquitin ligase catalyzing the covalent attachment of ubiquitin moieties onto substrate proteins. Triggers apoptosis in response to prolonged ER stress by mediating the polyubiquitination and subsequent proteasomal degradation of BCL2L1. May collaborate with FATE1 to restrain BIK protein levels thus regulating apoptotic signaling. The protein is E3 ubiquitin-protein ligase RNF183 (RNF183) of Homo sapiens (Human).